The chain runs to 177 residues: MSEFITVARPYAKAAFDFAVEHNSLDRWQNMLTFSAEVTRNESVAEMLSGALAPETLAAFFIDICGDQLDESGQNFIKVMAENGRLQVIPDVLQQFIALRDAMEATADVEVTSAAPLTQAQLDKISAAMEQRLSRKVKLNCKIDKSVLAGVVIRAGDLVIDGSIRGRLDRLTDVLQS.

The protein belongs to the ATPase delta chain family. In terms of assembly, F-type ATPases have 2 components, F(1) - the catalytic core - and F(0) - the membrane proton channel. F(1) has five subunits: alpha(3), beta(3), gamma(1), delta(1), epsilon(1). F(0) has three main subunits: a(1), b(2) and c(10-14). The alpha and beta chains form an alternating ring which encloses part of the gamma chain. F(1) is attached to F(0) by a central stalk formed by the gamma and epsilon chains, while a peripheral stalk is formed by the delta and b chains.

The protein resides in the cell inner membrane. Functionally, f(1)F(0) ATP synthase produces ATP from ADP in the presence of a proton or sodium gradient. F-type ATPases consist of two structural domains, F(1) containing the extramembraneous catalytic core and F(0) containing the membrane proton channel, linked together by a central stalk and a peripheral stalk. During catalysis, ATP synthesis in the catalytic domain of F(1) is coupled via a rotary mechanism of the central stalk subunits to proton translocation. In terms of biological role, this protein is part of the stalk that links CF(0) to CF(1). It either transmits conformational changes from CF(0) to CF(1) or is implicated in proton conduction. The sequence is that of ATP synthase subunit delta from Edwardsiella ictaluri (strain 93-146).